A 356-amino-acid polypeptide reads, in one-letter code: Altered inheritance of mitochondria protein 23, mitochondrial (356 aa).

The transit peptide at 1–32 (MLKVPLSDVLSQKMLFLKSFRYFHCTKYFSRD) directs the protein to the mitochondrion.

The protein belongs to the AIM23 family.

Its subcellular location is the mitochondrion. In Saccharomyces cerevisiae (strain YJM789) (Baker's yeast), this protein is Altered inheritance of mitochondria protein 23, mitochondrial (AIM23).